Here is a 282-residue protein sequence, read N- to C-terminus: HTH-type transcriptional activator RhaR (282 aa).

The HTH araC/xylS-type domain occupies 179–277; sequence DKLITALANS…GMTPSQWRHL (99 aa). 2 DNA-binding regions (H-T-H motif) span residues 196 to 217 and 244 to 267; these read DAFC…RAQT and ISEI…TRET.

In terms of assembly, binds DNA as a dimer.

It localises to the cytoplasm. Functionally, activates expression of the rhaSR operon in response to L-rhamnose. This is HTH-type transcriptional activator RhaR from Salmonella agona (strain SL483).